The following is a 713-amino-acid chain: Denticleless protein homolog (713 aa).

WD repeat units follow at residues 47 to 89 (GAAV…VQRL), 96 to 135 (AHTNAVFDIAWVPGEHKLVTASGDQTAKLWDVKAGDLIGE), and 138 to 178 (GHQC…KDGF). Positions 168-171 (WDTR) match the DDB1-binding motif motif. A Nuclear localization signal motif is present at residues 197 to 204 (PSKVKKRK). WD repeat units follow at residues 215–254 (DSQQSVTVVIFQDEHTIISAGAVDGIVKVWDLRKNYSAYR), 270–309 (TRKLGYSNLVLDPTGTNLFASCTDDNVYMFNATGLKTEPV), 314–355 (GHQN…VPPV), and 359–399 (GHCQ…EDSA). Residues 244-247 (WDLR) carry the DDB1-binding motif motif. Disordered regions lie at residues 474–544 (TPQR…EKRA), 604–623 (GFDQEFSPGPSTSFLINGTV), and 635–700 (SDLR…TPGS). Polar residues-rich tracts occupy residues 504-516 (TPKSSTRADTKTP) and 612-623 (GPSTSFLINGTV). Over residues 635 to 644 (SDLRDKENSS) the composition is skewed to basic and acidic residues. The span at 686–699 (NAPNSPVSVPTTPG) shows a compositional bias: polar residues.

Belongs to the WD repeat cdt2 family. Component of the DCX(DTL) E3 ubiquitin ligase complex, at least composed of cul4 (cul4a or cul4b), ddb1, dtl/cdt2 and rbx1.

Its subcellular location is the nucleus. The protein resides in the cytoplasm. It is found in the cytoskeleton. It localises to the microtubule organizing center. The protein localises to the centrosome. Its subcellular location is the chromosome. Its pathway is protein modification; protein ubiquitination. Its function is as follows. Substrate-specific adapter of a DCX (DDB1-CUL4-X-box) E3 ubiquitin-protein ligase complex required for cell cycle control, DNA damage response and translesion DNA synthesis. The DCX(DTL) complex, also named CRL4(CDT2) complex, mediates the polyubiquitination and subsequent degradation of CDT1, CDKN1A/p21(CIP1), KMT5A and SDE2. CDT1 degradation in response to DNA damage is necessary to ensure proper cell cycle regulation of DNA replication. CDKN1A/p21(CIP1) degradation during S phase or following UV irradiation is essential to control replication licensing. KMT5A degradation is also important for a proper regulation of mechanisms such as TGF-beta signaling, cell cycle progression, DNA repair and cell migration. Most substrates require their interaction with PCNA for their polyubiquitination: substrates interact with PCNA via their PIP-box, and those containing the 'K+4' motif in the PIP box, recruit the DCX(DTL) complex, leading to their degradation. In undamaged proliferating cells, the DCX(DTL) complex also promotes the 'Lys-164' monoubiquitination of PCNA, thereby being involved in PCNA-dependent translesion DNA synthesis. May play a role in the regulation of the circadian clock. The sequence is that of Denticleless protein homolog (dtl) from Xenopus tropicalis (Western clawed frog).